Reading from the N-terminus, the 211-residue chain is uncharacterized protein (211 aa).

This sequence belongs to the nucleoside deoxyribosyltransferase family.

Its subcellular location is the cytoplasm. It localises to the nucleus. This is an uncharacterized protein from Schizosaccharomyces pombe (strain 972 / ATCC 24843) (Fission yeast).